The sequence spans 439 residues: Glutamate-1-semialdehyde 2,1-aminomutase (439 aa).

Lysine 270 carries the post-translational modification N6-(pyridoxal phosphate)lysine.

Belongs to the class-III pyridoxal-phosphate-dependent aminotransferase family. HemL subfamily. In terms of assembly, homodimer. It depends on pyridoxal 5'-phosphate as a cofactor.

The protein resides in the cytoplasm. The catalysed reaction is (S)-4-amino-5-oxopentanoate = 5-aminolevulinate. It participates in porphyrin-containing compound metabolism; protoporphyrin-IX biosynthesis; 5-aminolevulinate from L-glutamyl-tRNA(Glu): step 2/2. The chain is Glutamate-1-semialdehyde 2,1-aminomutase from Kocuria rhizophila (strain ATCC 9341 / DSM 348 / NBRC 103217 / DC2201).